Reading from the N-terminus, the 152-residue chain is Ribosomal RNA large subunit methyltransferase H (152 aa).

Residues Leu-70, Gly-102, and 120-125 (LSPMTF) contribute to the S-adenosyl-L-methionine site.

This sequence belongs to the RNA methyltransferase RlmH family. As to quaternary structure, homodimer.

Its subcellular location is the cytoplasm. The enzyme catalyses pseudouridine(1915) in 23S rRNA + S-adenosyl-L-methionine = N(3)-methylpseudouridine(1915) in 23S rRNA + S-adenosyl-L-homocysteine + H(+). In terms of biological role, specifically methylates the pseudouridine at position 1915 (m3Psi1915) in 23S rRNA. The sequence is that of Ribosomal RNA large subunit methyltransferase H from Pelobacter propionicus (strain DSM 2379 / NBRC 103807 / OttBd1).